The chain runs to 578 residues: Proline--tRNA ligase (578 aa).

It belongs to the class-II aminoacyl-tRNA synthetase family. ProS type 1 subfamily. As to quaternary structure, homodimer.

It is found in the cytoplasm. The enzyme catalyses tRNA(Pro) + L-proline + ATP = L-prolyl-tRNA(Pro) + AMP + diphosphate. In terms of biological role, catalyzes the attachment of proline to tRNA(Pro) in a two-step reaction: proline is first activated by ATP to form Pro-AMP and then transferred to the acceptor end of tRNA(Pro). As ProRS can inadvertently accommodate and process non-cognate amino acids such as alanine and cysteine, to avoid such errors it has two additional distinct editing activities against alanine. One activity is designated as 'pretransfer' editing and involves the tRNA(Pro)-independent hydrolysis of activated Ala-AMP. The other activity is designated 'posttransfer' editing and involves deacylation of mischarged Ala-tRNA(Pro). The misacylated Cys-tRNA(Pro) is not edited by ProRS. The sequence is that of Proline--tRNA ligase from Brachyspira hyodysenteriae (strain ATCC 49526 / WA1).